The sequence spans 400 residues: Lysophospholipid transporter LplT (400 aa).

11 helical membrane passes run 19 to 39 (VIVA…ATLA), 53 to 73 (VLQM…GQIA), 91 to 111 (AGAA…LVGI), 139 to 159 (LMEA…GVLA), 164 to 184 (IAAL…NLFI), 227 to 247 (LFWG…PVAL), 257 to 277 (YLNA…AKLV), 281 to 301 (TVSR…IFSL), 304 to 324 (ALLP…FFVV), 352 to 372 (NSAM…GVPA), and 373 to 393 (VAIG…LWIW).

Belongs to the major facilitator superfamily. LplT (TC 2.A.1.42) family.

It is found in the cell inner membrane. In terms of biological role, catalyzes the facilitated diffusion of 2-acyl-glycero-3-phosphoethanolamine (2-acyl-GPE) into the cell. This Salmonella gallinarum (strain 287/91 / NCTC 13346) protein is Lysophospholipid transporter LplT.